We begin with the raw amino-acid sequence, 100 residues long: Small ribosomal subunit protein bS20 (100 aa).

Basic residues predominate over residues 1–20 (MASGKPKKKNPRLASGRKRV). The segment at 1-21 (MASGKPKKKNPRLASGRKRVR) is disordered.

The protein belongs to the bacterial ribosomal protein bS20 family.

Its function is as follows. Binds directly to 16S ribosomal RNA. The polypeptide is Small ribosomal subunit protein bS20 (Albidiferax ferrireducens (strain ATCC BAA-621 / DSM 15236 / T118) (Rhodoferax ferrireducens)).